Here is a 340-residue protein sequence, read N- to C-terminus: Chorismate mutase 1, chloroplastic (340 aa).

The N-terminal 65 residues, 1-65 (MEASLLMRSS…KPRSGTSSVH (65 aa)), are a transit peptide targeting the chloroplast. Ala66 carries the N-acetylalanine modification. Arg79 contributes to the L-phenylalanine binding site. Residues 79–340 (RVDESESLTL…QVEYLLRRLD (262 aa)) form the Chorismate mutase domain. Residues Arg150 and 211–214 (NYGS) contribute to the L-tyrosine site. 211-214 (NYGS) lines the L-phenylalanine pocket.

As to quaternary structure, homodimer. As to expression, expressed in roots, shoots, rosette leaves, stems, cauline leaves, flowers and siliques.

It localises to the plastid. Its subcellular location is the chloroplast. The enzyme catalyses chorismate = prephenate. The protein operates within metabolic intermediate biosynthesis; prephenate biosynthesis; prephenate from chorismate: step 1/1. Its activity is regulated as follows. Allosterically inhibited by tyrosine and phenylalanine. Activated by tryptophan. May play a role in chloroplast biogenesis. This is Chorismate mutase 1, chloroplastic from Arabidopsis thaliana (Mouse-ear cress).